The sequence spans 420 residues: UDP-N-acetyl-D-mannosamine dehydrogenase (420 aa).

The NAD(+) site is built by Tyr13, Ile14, Asp33, Thr85, and Thr126. Positions 160, 161, 212, 216, 219, 250, 252, and 263 each coordinate UDP-N-acetyl-alpha-D-mannosaminouronate. Lys212 acts as the Proton donor/acceptor in catalysis. Cys266 serves as the catalytic Nucleophile. The UDP-N-acetyl-alpha-D-mannosaminouronate site is built by Phe330 and Lys331. Arg338 lines the NAD(+) pocket. Residue Lys416 participates in UDP-N-acetyl-alpha-D-mannosaminouronate binding.

The protein belongs to the UDP-glucose/GDP-mannose dehydrogenase family. WecC subfamily. Homodimer.

The enzyme catalyses UDP-N-acetyl-alpha-D-mannosamine + 2 NAD(+) + H2O = UDP-N-acetyl-alpha-D-mannosaminouronate + 2 NADH + 3 H(+). It functions in the pathway bacterial outer membrane biogenesis; enterobacterial common antigen biosynthesis. Its function is as follows. Catalyzes the four-electron oxidation of UDP-N-acetyl-D-mannosamine (UDP-ManNAc), reducing NAD(+) and releasing UDP-N-acetylmannosaminuronic acid (UDP-ManNAcA). The polypeptide is UDP-N-acetyl-D-mannosamine dehydrogenase (Shigella flexneri).